Here is an 813-residue protein sequence, read N- to C-terminus: Nuclear pore complex protein 5 (813 aa).

It belongs to the nucleoporin Nup84/Nup107 family. Part of the nuclear pore complex (NPC). May interact with mdf-1.

It localises to the nucleus. The protein resides in the nuclear pore complex. The protein localises to the chromosome. Its subcellular location is the centromere. It is found in the kinetochore. It localises to the nucleus membrane. In terms of biological role, involved in kinetochore assembly and chromosome segregation during embryonic mitosis. Required for the localization of the NDC80 complex member him-10, the chromosomal passenger complex component air-2 and nuclear pore complex proteins npp-23 and npp-15 to kinetochores during metaphase. Required for npp-23 localization to the nuclear envelope during interphase. Recruits mdf-1, a component of the spindle assembly checkpoint, to the nuclear envelope. Appears dispensable for the assembly of the nuclear pore complex and for nuclear protein import. In Caenorhabditis elegans, this protein is Nuclear pore complex protein 5.